A 570-amino-acid polypeptide reads, in one-letter code: MSFSMTRELYTAKYGPTVGDAVRLGDTDLFIEIEKDYTSYGDEVIFGGGKVIRDGMGQDPLISRAEGAMDLVITNAVILDYSGIYKADIGIKDGKIAAIGKSGNPRIMKNVDIIIGASTEIIAGEGLIVTAGGIDTHIHFISPQQVDVALTSGVTTLIGGGTGPAEGTKATTCTPGEWNIHRMLESVEGLPINVGLLGKGSTSSDVALTEQIRAGVIGLKIHEDFGAMRSVIDHSLKIADEYDVQVAIHTDTLNEFGFVEDTIDSINGRVIHTFHTEGAGGGHAPDIIKMGAFSNVLPASTNPTKPYTINTIDEHMDMLMVCHHLRRNVPEDVAFADSRIRKETIAAEDILHDMGIFSIMSSDSQAMGRIGEVITRTWQTADKMKKQRGKLQGDSGVGDNNRAKRYISKYTINPAIAHGINTYVGSVEVGKYADLVLWQPQFFGAKPNMIIKCGMVANSIMGDANASIPTPQPITYRPMYASYGLALQRSSITFVSKIAFELGVHKKLGLEKTVLPVFGIRNLTKQDMKHNCETPEITVDPQTYDVRVNGELITCEPAAELPLAQRYFLF.

Ni(2+) contacts are provided by His137, His139, and Lys220. Position 220 is an N6-carboxylysine (Lys220). Substrate is bound at residue His222. Positions 249 and 275 each coordinate Ni(2+). The active-site Proton donor is the His323. Ni(2+) is bound at residue Asp363.

This sequence belongs to the metallo-dependent hydrolases superfamily. Urease alpha subunit family. In terms of assembly, heterotrimer of UreA (gamma), UreB (beta) and UreC (alpha) subunits. Three heterotrimers associate to form the active enzyme. Ni cation serves as cofactor. Post-translationally, carboxylation allows a single lysine to coordinate two nickel ions.

The protein localises to the cytoplasm. It carries out the reaction urea + 2 H2O + H(+) = hydrogencarbonate + 2 NH4(+). It functions in the pathway nitrogen metabolism; urea degradation; CO(2) and NH(3) from urea (urease route): step 1/1. The chain is Urease subunit alpha from Lachnoclostridium phytofermentans (strain ATCC 700394 / DSM 18823 / ISDg) (Clostridium phytofermentans).